The chain runs to 297 residues: Cbb3-type cytochrome c oxidase subunit CcoP (297 aa).

Over 1-35 (MSKKPTTKKEVQTTGHQWDGIEELNTPLPRWWLWT) the chain is Cytoplasmic. Residues 36–56 (FYATIIWGVAYSIAMPAWPIF) traverse the membrane as a helical segment. Residues 57–297 (SDKATPGLLG…SYVHSLGGGQ (241 aa)) are Periplasmic-facing. 2 Cytochrome c domains span residues 108-199 (YTRN…LQIS) and 206-294 (VKAT…HSLG). Positions 121, 124, 125, 174, 219, 222, 223, and 264 each coordinate heme c.

This sequence belongs to the CcoP / FixP family. As to quaternary structure, component of the cbb3-type cytochrome c oxidase at least composed of CcoN, CcoO, CcoQ and CcoP. Interacts with CcoQ. The cofactor is heme c.

It localises to the cell inner membrane. It functions in the pathway energy metabolism; oxidative phosphorylation. C-type cytochrome. Part of the cbb3-type cytochrome c oxidase complex. CcoP subunit is required for transferring electrons from donor cytochrome c via its heme groups to CcoO subunit. From there, electrons are shuttled to the catalytic binuclear center of CcoN subunit where oxygen reduction takes place. The complex also functions as a proton pump. This Rhodobacter capsulatus (Rhodopseudomonas capsulata) protein is Cbb3-type cytochrome c oxidase subunit CcoP.